A 114-amino-acid polypeptide reads, in one-letter code: UPF0212 protein Mbur_0968 (114 aa).

Belongs to the UPF0212 family.

The chain is UPF0212 protein Mbur_0968 from Methanococcoides burtonii (strain DSM 6242 / NBRC 107633 / OCM 468 / ACE-M).